The following is a 430-amino-acid chain: Adenylosuccinate synthetase (430 aa).

GTP-binding positions include 12-18 (GDEGKGK) and 40-42 (GHT). Asp-13 acts as the Proton acceptor in catalysis. Positions 13 and 40 each coordinate Mg(2+). IMP is bound by residues 13 to 16 (DEGK), 38 to 41 (NAGH), Thr-128, Arg-142, Gln-223, Thr-238, and Arg-302. His-41 acts as the Proton donor in catalysis. 298-304 (TTTGRPR) serves as a coordination point for substrate. GTP contacts are provided by residues Arg-304, 330–332 (SID), and 412–414 (SVG).

The protein belongs to the adenylosuccinate synthetase family. Homodimer. The cofactor is Mg(2+).

The protein resides in the cytoplasm. It catalyses the reaction IMP + L-aspartate + GTP = N(6)-(1,2-dicarboxyethyl)-AMP + GDP + phosphate + 2 H(+). Its pathway is purine metabolism; AMP biosynthesis via de novo pathway; AMP from IMP: step 1/2. Functionally, plays an important role in the de novo pathway of purine nucleotide biosynthesis. Catalyzes the first committed step in the biosynthesis of AMP from IMP. This is Adenylosuccinate synthetase from Streptococcus pyogenes serotype M3 (strain ATCC BAA-595 / MGAS315).